The primary structure comprises 271 residues: Monalysin (271 aa).

Positions 1 to 33 are excised as a propeptide; that stretch reads MTIKEELGQPQSHSIELDEVSKEAASTRAALTS. The tract at residues 102 to 170 is pore-forming domain; that stretch reads IPQNVTTTLS…FTDTTEMKGP (69 aa).

In terms of assembly, pro-Monalysin forms a stable donut-like 18-mer complex composed of two disk-shaped nonamers held together by N-terminal swapping of the pro-peptides. After proteolytic cleavage, the inactive 18-mer complex probably dissociates into two disk-shaped active nonamers in which the transmembrane segments are unmasked and ready to engage the conformational change leading to the pore formation into the target membrane. Multimerizes into circular-like structures and barrel-like aggregates. Post-translationally, requires N-terminal cleavage to become fully active. The metalloprotease AprA can induce the rapid cleavage of pro-Monalysin into its active form. Can also be processed by trypsin.

It localises to the secreted. It is found in the host cell membrane. Its function is as follows. Pore-forming toxin that contributes to the virulence of P.entomophila against Drosophila, playing an important role in host intestinal damage and lethality. Displays cytolytic and hemolytic activity. The protein is Monalysin of Pseudomonas entomophila (strain L48).